A 273-amino-acid chain; its full sequence is Probable membrane transporter protein YunE (273 aa).

8 consecutive transmembrane segments (helical) span residues 3–23 (FVIL…IGLG), 50–70 (AIGT…LAYI), 81–101 (LIFF…SKLF), 105–125 (SFSV…MLKA), 157–177 (VGIA…IGGG), 185–205 (MLLF…IIFL), 222–242 (WLYA…GAAI), and 251–271 (IVMI…YEGI).

This sequence belongs to the 4-toluene sulfonate uptake permease (TSUP) (TC 2.A.102) family.

It localises to the cell membrane. The sequence is that of Probable membrane transporter protein YunE (yunE) from Bacillus subtilis (strain 168).